The primary structure comprises 210 residues: Protein-L-isoaspartate O-methyltransferase (210 aa).

The active site involves S60.

Belongs to the methyltransferase superfamily. L-isoaspartyl/D-aspartyl protein methyltransferase family.

It localises to the cytoplasm. It catalyses the reaction [protein]-L-isoaspartate + S-adenosyl-L-methionine = [protein]-L-isoaspartate alpha-methyl ester + S-adenosyl-L-homocysteine. Its function is as follows. Catalyzes the methyl esterification of L-isoaspartyl residues in peptides and proteins that result from spontaneous decomposition of normal L-aspartyl and L-asparaginyl residues. It plays a role in the repair and/or degradation of damaged proteins. In Xylella fastidiosa (strain M12), this protein is Protein-L-isoaspartate O-methyltransferase.